Consider the following 421-residue polypeptide: Serine hydroxymethyltransferase (421 aa).

(6S)-5,6,7,8-tetrahydrofolate is bound by residues L120 and 124 to 126 (GHL). An N6-(pyridoxal phosphate)lysine modification is found at K229. (6S)-5,6,7,8-tetrahydrofolate is bound at residue 354–356 (SPF).

It belongs to the SHMT family. In terms of assembly, homodimer. Pyridoxal 5'-phosphate is required as a cofactor.

Its subcellular location is the cytoplasm. The catalysed reaction is (6R)-5,10-methylene-5,6,7,8-tetrahydrofolate + glycine + H2O = (6S)-5,6,7,8-tetrahydrofolate + L-serine. The protein operates within one-carbon metabolism; tetrahydrofolate interconversion. Its pathway is amino-acid biosynthesis; glycine biosynthesis; glycine from L-serine: step 1/1. Its function is as follows. Catalyzes the reversible interconversion of serine and glycine with tetrahydrofolate (THF) serving as the one-carbon carrier. This reaction serves as the major source of one-carbon groups required for the biosynthesis of purines, thymidylate, methionine, and other important biomolecules. Also exhibits THF-independent aldolase activity toward beta-hydroxyamino acids, producing glycine and aldehydes, via a retro-aldol mechanism. This chain is Serine hydroxymethyltransferase, found in Opitutus terrae (strain DSM 11246 / JCM 15787 / PB90-1).